The sequence spans 395 residues: Calreticulin (395 aa).

The first 15 residues, 1 to 15 (MKSLCLLAIVAVVSA), serve as a signal peptide directing secretion. A disulfide bridge links Cys101 with Cys133. The an alpha-D-glucoside site is built by Tyr105, Lys107, Tyr124, and Asp131. A run of 7 repeats spans residues 186 to 197 (AQTGSLEEDWDL), 205 to 216 (DPDAKKPEDWDE), 222 to 233 (DAEDAKPEDWEK), 239 to 250 (DPDAKKPEDWDD), 254 to 264 (GEWEPPMIDNP), 268 to 278 (GEWKPKQIKNP), and 282 to 292 (GKWIHPEIENP). The 4 X approximate repeats stretch occupies residues 186–250 (AQTGSLEEDW…DAKKPEDWDD (65 aa)). Residues 193–301 (EDWDLLPAKK…PEYTPDDELY (109 aa)) form a P-domain region. The span at 202-212 (KIKDPDAKKPE) shows a compositional bias: basic and acidic residues. Residues 202-255 (KIKDPDAKKPEDWDEREYIDDAEDAKPEDWEKPEHIPDPDAKKPEDWDDEMDGE) are disordered. The span at 213–224 (DWDEREYIDDAE) shows a compositional bias: acidic residues. Residues 225–246 (DAKPEDWEKPEHIPDPDAKKPE) show a composition bias toward basic and acidic residues. Positions 254–292 (GEWEPPMIDNPEYKGEWKPKQIKNPAYKGKWIHPEIENP) are 3 X approximate repeats. The segment at 302–395 (SYESWGAIGF…KEEEEGHDEL (94 aa)) is C-domain. Residue Asp312 participates in an alpha-D-glucoside binding. The segment covering 340-380 (ETFDKLKTVEKEKKEKADEETRKAEEEARKKAEEEKEAKKD) has biased composition (basic and acidic residues). Positions 340–395 (ETFDKLKTVEKEKKEKADEETRKAEEEARKKAEEEKEAKKDDDEEEKEEEEGHDEL) are disordered. Acidic residues predominate over residues 381 to 395 (DDEEEKEEEEGHDEL). The Prevents secretion from ER motif lies at 392–395 (HDEL).

Belongs to the calreticulin family. In terms of processing, cleaved by caspase ced-3 in vitro.

Its subcellular location is the endoplasmic reticulum lumen. Molecular calcium-binding chaperone promoting folding, oligomeric assembly and quality control in the endoplasmic reticulum (ER) via the calreticulin/calnexin cycle. This lectin may interact transiently with almost all of the monoglucosylated glycoproteins that are synthesized in the ER. Probably by controlling the folding of extracellular matrix protein unc-52/Perlecan, may play a role in the formation of fibrous organelles, a hemidesmosome-like structure attaching muscles to the epidermis. Protects dopaminergic neurons against oxidative stress-induced neurodegeneration. May play a role in protection against ER stress. Plays a role in modulating lifespan, acting by influencing ER calcium homeostasis. This is Calreticulin (crt-1) from Caenorhabditis elegans.